The sequence spans 180 residues: Large ribosomal subunit protein uL5 (180 aa).

Belongs to the universal ribosomal protein uL5 family. As to quaternary structure, part of the 50S ribosomal subunit; part of the 5S rRNA/L5/L18/L25 subcomplex. Contacts the 5S rRNA and the P site tRNA. Forms a bridge to the 30S subunit in the 70S ribosome.

This is one of the proteins that bind and probably mediate the attachment of the 5S RNA into the large ribosomal subunit, where it forms part of the central protuberance. In the 70S ribosome it contacts protein S13 of the 30S subunit (bridge B1b), connecting the 2 subunits; this bridge is implicated in subunit movement. Contacts the P site tRNA; the 5S rRNA and some of its associated proteins might help stabilize positioning of ribosome-bound tRNAs. This is Large ribosomal subunit protein uL5 from Xanthomonas oryzae pv. oryzae (strain MAFF 311018).